A 205-amino-acid polypeptide reads, in one-letter code: Adenylyl-sulfate kinase (205 aa).

ATP is bound at residue 31-38 (GLSGSGKS). Serine 105 (phosphoserine intermediate) is an active-site residue.

This sequence belongs to the APS kinase family.

The catalysed reaction is adenosine 5'-phosphosulfate + ATP = 3'-phosphoadenylyl sulfate + ADP + H(+). The protein operates within sulfur metabolism; hydrogen sulfide biosynthesis; sulfite from sulfate: step 2/3. In terms of biological role, catalyzes the synthesis of activated sulfate. The polypeptide is Adenylyl-sulfate kinase (Shewanella pealeana (strain ATCC 700345 / ANG-SQ1)).